The following is a 459-amino-acid chain: Glycosyl hydrolase family 109 protein 1 (459 aa).

Positions Met-1 to Ala-31 form a signal peptide, tat-type signal. NAD(+)-binding positions include Glu-64–Arg-65, Asp-86, Trp-135–His-138, Glu-155–Val-156, and Asn-184. Substrate-binding positions include Tyr-213, Arg-232, Tyr-244–His-247, and Tyr-326. NAD(+) is bound at residue Tyr-244.

It belongs to the Gfo/Idh/MocA family. Glycosyl hydrolase 109 subfamily. NAD(+) is required as a cofactor. In terms of processing, predicted to be exported by the Tat system. The position of the signal peptide cleavage has not been experimentally proven.

Glycosidase. This Shewanella sp. (strain ANA-3) protein is Glycosyl hydrolase family 109 protein 1.